A 396-amino-acid chain; its full sequence is B2 bradykinin receptor (396 aa).

Residues 1–65 lie on the Extracellular side of the membrane; it reads MDTRSSLCPK…EWWSWLNAIQ (65 aa). N-linked (GlcNAc...) asparagine glycans are attached at residues Asn-33 and Asn-44. A helical transmembrane segment spans residues 66 to 89; the sequence is APFLWVLFLLAALENIFVLSVFCL. Residues 90 to 98 lie on the Cytoplasmic side of the membrane; it reads HKTNCTVAE. The helical transmembrane segment at 99-123 threads the bilayer; sequence IYLGNLAAADLILACGLPFWAITIA. At 124–136 the chain is on the extracellular side; that stretch reads NNFDWLFGEVLCR. Cys-135 and Cys-216 are disulfide-bonded. Residues 137–158 form a helical membrane-spanning segment; that stretch reads VVNTMIYMNLYSSICFLMLVSI. The Cytoplasmic portion of the chain corresponds to 159 to 180; it reads DRYLALVKTMSMGRMRGVRWAK. Tyr-161 carries the post-translational modification Phosphotyrosine. The helical transmembrane segment at 181–203 threads the bilayer; sequence LYSLVIWSCTLLLSSPMLVFRTM. Over 204-226 the chain is Extracellular; sequence KDYREEGHNVTACVIVYPSRSWE. N-linked (GlcNAc...) asparagine glycosylation is present at Asn-212. Residues 227–253 traverse the membrane as a helical segment; the sequence is VFTNMLLNLVGFLLPLSIITFCTVRIM. Residues 254–272 lie on the Cytoplasmic side of the membrane; it reads QVLRNNEMKKFKEVQTEKK. Residues 273–297 traverse the membrane as a helical segment; that stretch reads ATVLVLAVLGLFVLCWFPFQISTFL. The Extracellular segment spans residues 298–316; that stretch reads DTLLRLGVLSGCWNERAVD. Residues 317–340 form a helical membrane-spanning segment; it reads IVTQISSYVAYSNSCLNPLVYVIV. Residues 341 to 396 are Cytoplasmic-facing; it reads GKRFRKKSREVYQAICRKGGCMGESVQMENSMGTLRTSISVDRQIHKLQDWAGNKQ. Phosphotyrosine is present on Tyr-352. Cys-356 is lipidated: S-palmitoyl cysteine. A phosphoserine mark is found at Ser-365 and Ser-371. The residue at position 374 (Thr-374) is a Phosphothreonine. Ser-378 and Ser-380 each carry phosphoserine; by GRK6.

Belongs to the G-protein coupled receptor 1 family. Bradykinin receptor subfamily. BDKRB2 sub-subfamily. In terms of assembly, forms a complex with PECAM1 and GNAQ. Interacts with PECAM1. Post-translationally, diphosphorylation at Ser-365 and Ser-371, at Ser-378 and Ser-380, and at Thr-374 and Ser-380 seem to be correlated pairwise. Palmitoylation at Cys-356 and phosphorylation at Tyr-352 seem to be mutually exclusive. As to expression, uterus, vas deferens, kidney, ileum, heart, testis, lung and brain.

It localises to the cell membrane. Receptor for bradykinin. It is associated with G proteins that activate a phosphatidylinositol-calcium second messenger system. This Rattus norvegicus (Rat) protein is B2 bradykinin receptor (Bdkrb2).